Here is a 143-residue protein sequence, read N- to C-terminus: Large ribosomal subunit protein uL11 (143 aa).

The protein belongs to the universal ribosomal protein uL11 family. As to quaternary structure, part of the ribosomal stalk of the 50S ribosomal subunit. Interacts with L10 and the large rRNA to form the base of the stalk. L10 forms an elongated spine to which L12 dimers bind in a sequential fashion forming a multimeric L10(L12)X complex. In terms of processing, one or more lysine residues are methylated.

Its function is as follows. Forms part of the ribosomal stalk which helps the ribosome interact with GTP-bound translation factors. In Methylibium petroleiphilum (strain ATCC BAA-1232 / LMG 22953 / PM1), this protein is Large ribosomal subunit protein uL11.